Here is a 116-residue protein sequence, read N- to C-terminus: Iron-sulfur cluster insertion protein ErpA (116 aa).

Positions 44, 108, and 110 each coordinate iron-sulfur cluster.

Belongs to the HesB/IscA family. As to quaternary structure, homodimer. Iron-sulfur cluster is required as a cofactor.

In terms of biological role, required for insertion of 4Fe-4S clusters for at least IspG. This chain is Iron-sulfur cluster insertion protein ErpA, found in Shewanella putrefaciens (strain CN-32 / ATCC BAA-453).